We begin with the raw amino-acid sequence, 363 residues long: Phospho-N-acetylmuramoyl-pentapeptide-transferase (363 aa).

10 helical membrane passes run 3 to 23 (TVLI…PLYI), 55 to 75 (VVII…TGAL), 76 to 96 (PTVS…VGFL), 116 to 136 (LAGQ…FPAA), 158 to 178 (LAVF…LIIT), 190 to 210 (GLDG…VLIC), 237 to 257 (LAVV…WNAS), 261 to 281 (IFMG…LAIL), 286 to 306 (ILLV…ILQV), and 340 to 360 (FWII…AEWV).

Belongs to the glycosyltransferase 4 family. MraY subfamily. The cofactor is Mg(2+).

The protein resides in the cell membrane. It carries out the reaction UDP-N-acetyl-alpha-D-muramoyl-L-alanyl-gamma-D-glutamyl-meso-2,6-diaminopimeloyl-D-alanyl-D-alanine + di-trans,octa-cis-undecaprenyl phosphate = di-trans,octa-cis-undecaprenyl diphospho-N-acetyl-alpha-D-muramoyl-L-alanyl-D-glutamyl-meso-2,6-diaminopimeloyl-D-alanyl-D-alanine + UMP. The protein operates within cell wall biogenesis; peptidoglycan biosynthesis. Catalyzes the initial step of the lipid cycle reactions in the biosynthesis of the cell wall peptidoglycan: transfers peptidoglycan precursor phospho-MurNAc-pentapeptide from UDP-MurNAc-pentapeptide onto the lipid carrier undecaprenyl phosphate, yielding undecaprenyl-pyrophosphoryl-MurNAc-pentapeptide, known as lipid I. This chain is Phospho-N-acetylmuramoyl-pentapeptide-transferase, found in Kineococcus radiotolerans (strain ATCC BAA-149 / DSM 14245 / SRS30216).